Consider the following 913-residue polypeptide: Auxilin (913 aa).

Position 1 is an N-acetylmethionine (M1). Repeat copies occupy residues 36-39, 40-43, and 44-47. The 3 X 4 AA approximate tandem repeats stretch occupies residues 36-47; the sequence is NLKDNLKDTLKD. The Phosphatase tensin-type domain maps to 55 to 222; that stretch reads SVTSYTKGDL…GYMCDLLADK (168 aa). Phosphoserine is present on S112. The Phosphocysteine intermediate role is filled by C164. Positions 228–366 constitute a C2 tensin-type domain; that stretch reads FKPLTIKSIT…FQVTLDVELQ (139 aa). The short motif at 409–417 is the SH3-binding element; that stretch reads PIDIPPDNP. The disordered stretch occupies residues 451-776; the sequence is QESEQSDDEL…GKGSSNLEGK (326 aa). Residues S453 and S456 each carry the phosphoserine modification. A compositionally biased stretch (polar residues) spans 506–523; it reads AMSNSFSPPAAPPTNSEL. The span at 554–572 shows a compositional bias: low complexity; sequence ASTQSTPRRSATSTSASPT. A phosphoserine mark is found at S563 and S570. The span at 599–629 shows a compositional bias: polar residues; sequence FLNTSSASSDPFLQPTRSPSPTVHASSTPAV. The segment covering 654–669 has biased composition (low complexity); the sequence is SAATSPTGSSHGTPTH. The 65-residue stretch at 849-913 folds into the J domain; the sequence is TKWKPVGMAD…FENQGQKPLY (65 aa).

Forms a complex composed of HSPA8, CLTC and DNAJC6. Interacts with HSPA8/HSC70 in an ATP-dependent manner; this interaction stimulates the HSPA8's ATPase activity. Interacts with CLTC; this interaction produces a local change in heavy-chain contacts, creating a detectable global distortion of the clathrin coat. Interacts with AP2A2. Interacts with DNM1(GTP-bound form); this interaction allows clathrin-coated vesicle (CCV) formation at the plasma membrane. In terms of processing, phosphorylation at Ser-570 modulates its ability to bind CLTC and therefore the synaptic vesicle endocytosis (SVE). Post-translationally, the N-terminus is blocked. In terms of tissue distribution, expressed in various brain regions, including cerebellum, corpus callosum, cortex, striatum, brainstem, pons, putamen, spinal cord and substantia nigra. Very low expression in non-neural tissues such as leukocytes, liver, adipose tissue, skeletal muscle and bone marrow.

Its subcellular location is the cytoplasmic vesicle. It localises to the clathrin-coated vesicle. May act as a protein phosphatase and/or a lipid phosphatase. Co-chaperone that recruits HSPA8/HSC70 to clathrin-coated vesicles (CCVs) and promotes the ATP-dependent dissociation of clathrin from CCVs and participates in clathrin-mediated endocytosis of synaptic vesicles and their recycling and also in intracellular trafficking. Firstly, binds tightly to the clathrin cages, at a ratio of one DNAJC6 per clathrin triskelion. The HSPA8:ATP complex then binds to the clathrin-auxilin cage, initially at a ratio of one HSPA8 per triskelion leading to ATP hydrolysis stimulation and causing a conformational change in the HSPA8. This cycle is repeated three times to drive to a complex containing the clathrin-auxilin cage associated to three HSPA8:ADP complex. The ATP hydrolysis of the third HSPA8:ATP complex leads to a concerted dismantling of the cage into component triskelia. Then, dissociates from the released triskelia and be recycled to initiate another cycle of HSPA8's recruitment. Also acts during the early steps of clathrin-coated vesicle (CCV) formation through its interaction with the GTP bound form of DNM1. This Homo sapiens (Human) protein is Auxilin.